A 126-amino-acid polypeptide reads, in one-letter code: Probable flagellum biosynthesis repressor protein FlbT (126 aa).

It belongs to the FlbT family.

Has a post-transcriptional repressor function in flagellum biogenesis. Associates with the 5'-UTR of fljK mRNA and promotes its degradation. The polypeptide is Probable flagellum biosynthesis repressor protein FlbT (Rhodopseudomonas palustris (strain ATCC BAA-98 / CGA009)).